The chain runs to 2118 residues: Separin (2118 aa).

Residue S1121 is modified to Phosphoserine. The span at 1309–1318 (KCSGRGRRRI) shows a compositional bias: basic residues. The disordered stretch occupies residues 1309-1352 (KCSGRGRRRIASVPPPLHNSSQKGLEEEGPPCTPKPPGRARQAG). A phosphoserine mark is found at S1391 and S1394. Residues 1408–1428 (EEPKRRGTASRTRGQTRKGRS) form a disordered region. A Phosphoserine modification is found at S1504. Positions 1941–2036 (PQNTFYVLNP…SAALAVHGNL (96 aa)) constitute a Peptidase C50 domain. Residue C2025 is part of the active site.

Interacts with PTTG1. Interacts with RAD21. In terms of processing, autocleaves. This function, which is not essential for its protease activity, is unknown. Phosphorylated by CDK1. There is 8 Ser/Thr phosphorylation sites. Among them, only Ser-1121 phosphorylation is the major site, which conducts to the enzyme inactivation.

The protein resides in the cytoplasm. It localises to the nucleus. The enzyme catalyses All bonds known to be hydrolyzed by this endopeptidase have arginine in P1 and an acidic residue in P4. P6 is often occupied by an acidic residue or by a hydroxy-amino-acid residue, the phosphorylation of which enhances cleavage.. With respect to regulation, regulated by at least two independent mechanisms. First, it is inactivated via its interaction with securin/PTTG1, which probably covers its active site. The association with PTTG1 is not only inhibitory, since PTTG1 is also required for activating it, the enzyme being inactive in cells in which PTTG1 is absent. PTTG1 degradation at anaphase, liberates it and triggers RAD21 cleavage. Second, phosphorylation at Ser-1121 inactivates it. The complete phosphorylation during mitosis, is removed when cells undergo anaphase. Activation of the enzyme at the metaphase-anaphase transition probably requires the removal of both securin and inhibitory phosphate. Functionally, caspase-like protease, which plays a central role in the chromosome segregation by cleaving the SCC1/RAD21 subunit of the cohesin complex at the onset of anaphase. During most of the cell cycle, it is inactivated by different mechanisms. This chain is Separin (Espl1), found in Mus musculus (Mouse).